The chain runs to 123 residues: D-ribose pyranase (123 aa).

The active-site Proton donor is His20. Substrate-binding positions include Asp28, His90, and 112 to 114; that span reads YAN.

It belongs to the RbsD / FucU family. RbsD subfamily. As to quaternary structure, homodecamer.

It localises to the cytoplasm. It carries out the reaction beta-D-ribopyranose = beta-D-ribofuranose. The protein operates within carbohydrate metabolism; D-ribose degradation; D-ribose 5-phosphate from beta-D-ribopyranose: step 1/2. Catalyzes the interconversion of beta-pyran and beta-furan forms of D-ribose. The sequence is that of D-ribose pyranase from Corynebacterium glutamicum (strain R).